Reading from the N-terminus, the 331-residue chain is Serpentine receptor class alpha-9 (331 aa).

Transmembrane regions (helical) follow at residues 26 to 46, 58 to 78, 104 to 124, 142 to 162, 189 to 209, 238 to 258, and 275 to 295; these read IDLL…QLVL, LILE…IEAI, YLKV…GLMI, IIGF…GKLF, YFTV…LLKI, VCFL…GVGA, and LCVV…LLLI.

This sequence belongs to the nematode receptor-like protein sra family.

It is found in the membrane. This Caenorhabditis elegans protein is Serpentine receptor class alpha-9 (sra-9).